A 224-amino-acid chain; its full sequence is Ribonuclease HII (224 aa).

One can recognise an RNase H type-2 domain in the interval 1–219; sequence MMIAGIDEAG…VENIREELKK (219 aa). A divalent metal cation is bound by residues Asp-7, Glu-8, and Asp-105.

The protein belongs to the RNase HII family. It depends on Mn(2+) as a cofactor. Requires Mg(2+) as cofactor.

It localises to the cytoplasm. It catalyses the reaction Endonucleolytic cleavage to 5'-phosphomonoester.. In terms of biological role, endonuclease that specifically degrades the RNA of RNA-DNA hybrids. The polypeptide is Ribonuclease HII (Methanosarcina barkeri (strain Fusaro / DSM 804)).